The chain runs to 280 residues: UPF0494 membrane protein C750.06c (280 aa).

4 consecutive transmembrane segments (helical) span residues 107 to 127, 144 to 164, 178 to 198, and 199 to 219; these read WPLL…KFEV, IWVP…SLIF, VIIA…GMII, and AALG…LYFG.

The protein belongs to the UPF0494 family.

Its subcellular location is the cytoplasm. It is found in the vacuole. The protein localises to the membrane. In Schizosaccharomyces pombe (strain 972 / ATCC 24843) (Fission yeast), this protein is UPF0494 membrane protein C750.06c.